We begin with the raw amino-acid sequence, 241 residues long: MTESNDTPIQPEAGDERQHRRIKSFVMRAGRMTEGQQRGLDQGAPLYVLPLADAPVDYDQVFGRSAPRSLEIGFGMGHSLLEMAAAAPEQDFIGVEVHRPGVGALLNGVLTQGLTNLRVYDCDAIEVLNRCIADNSLDRLMLFFPDPWHKSRHHKRRIVQASFAELVRSKLKVGGILHMATDWEPYAEYMLEVMNVAPGYRNLAEDGKCVPRPAERPITKFERRGERLGHGVWDLKFEKLA.

The tract at residues 1–20 (MTESNDTPIQPEAGDERQHR) is disordered. Positions 71, 96, 123, and 146 each coordinate S-adenosyl-L-methionine. D146 is a catalytic residue. Residues K150, D182, and 219-222 (TKFE) contribute to the substrate site.

The protein belongs to the class I-like SAM-binding methyltransferase superfamily. TrmB family.

It carries out the reaction guanosine(46) in tRNA + S-adenosyl-L-methionine = N(7)-methylguanosine(46) in tRNA + S-adenosyl-L-homocysteine. It participates in tRNA modification; N(7)-methylguanine-tRNA biosynthesis. Its function is as follows. Catalyzes the formation of N(7)-methylguanine at position 46 (m7G46) in tRNA. In Pseudomonas fluorescens (strain ATCC BAA-477 / NRRL B-23932 / Pf-5), this protein is tRNA (guanine-N(7)-)-methyltransferase.